We begin with the raw amino-acid sequence, 305 residues long: Suppressor of activated egl-4 protein 2 (305 aa).

Residues 138 to 168 (KRGYESDSSDVSGVSHCSDAKRRRGRPRKDE) form a disordered region. The a.T hook DNA-binding region spans 158-170 (KRRRGRPRKDEEA).

As to quaternary structure, interacts with phosphorylated egl-4. May interact with itself. May be a component of a histone deacetylase complex containing saeg-2, saeg-1 and hda-2. As to expression, ubiquitously expressed.

Its subcellular location is the nucleus. In terms of biological role, as a likely component of a histone deacetylase complex, together with saeg-1 and hda-2, functions downstream of the cAMP-dependent kinase egl-4 to regulate the expression of genes required for egg-laying and foraging. The chain is Suppressor of activated egl-4 protein 2 from Caenorhabditis elegans.